The primary structure comprises 1152 residues: Alpha-mannosidase 2x (1152 aa).

Topologically, residues 1 to 5 are cytoplasmic; that stretch reads MKLKK. A helical; Signal-anchor for type II membrane protein membrane pass occupies residues 6–26; sequence QVTVCGAAIFCVAVFSLYLML. Residues 27-796 lie on the Lumenal side of the membrane; it reads DRVQHDPARH…VDEEQEQQME (770 aa). Residues 43 to 74 adopt a coiled-coil conformation; sequence PRSQISVLQNRIEQLEQLLEENHDIISRIKDS. Zn(2+)-binding residues include His-175 and Asp-177. A glycan (N-linked (GlcNAc...) asparagine) is linked at Asn-225. Asp-289 is a Zn(2+) binding site. The active-site Nucleophile is Asp-289. N-linked (GlcNAc...) asparagine glycosylation occurs at Asn-305. His-569 lines the Zn(2+) pocket.

This sequence belongs to the glycosyl hydrolase 38 family. Homodimer; disulfide-linked. Interacts with MGAT4D. Zn(2+) is required as a cofactor.

It is found in the golgi apparatus membrane. It catalyses the reaction N(4)-{beta-D-GlcNAc-(1-&gt;2)-alpha-D-Man-(1-&gt;3)-[alpha-D-Man-(1-&gt;3)-[alpha-D-Man-(1-&gt;6)]-alpha-D-Man-(1-&gt;6)]-beta-D-Man-(1-&gt;4)-beta-D-GlcNAc-(1-&gt;4)-beta-D-GlcNAc}-L-asparaginyl-[protein] + 2 H2O = 2 alpha-D-mannopyranose + an N(4)-{beta-D-GlcNAc-(1-&gt;2)-alpha-D-Man-(1-&gt;3)-[alpha-D-Man-(1-&gt;6)]-beta-D-Man-(1-&gt;4)-beta-D-GlcNAc-(1-&gt;4)-beta-D-GlcNAc}-L-asparaginyl-[protein]. It participates in protein modification; protein glycosylation. Its function is as follows. Catalyzes the first committed step in the biosynthesis of complex N-glycans. It controls conversion of high mannose to complex N-glycans; the final hydrolytic step in the N-glycan maturation pathway. This chain is Alpha-mannosidase 2x (Man2a2), found in Mus musculus (Mouse).